Consider the following 475-residue polypeptide: Kynureninase (475 aa).

Pyridoxal 5'-phosphate is bound by residues leucine 141, threonine 142, 169–172, aspartate 254, histidine 257, and tyrosine 279; that span reads FPSD. Lysine 280 carries the N6-(pyridoxal phosphate)lysine modification. Positions 319 and 347 each coordinate pyridoxal 5'-phosphate.

This sequence belongs to the kynureninase family. Homodimer. It depends on pyridoxal 5'-phosphate as a cofactor.

It is found in the cytoplasm. It catalyses the reaction L-kynurenine + H2O = anthranilate + L-alanine + H(+). The enzyme catalyses 3-hydroxy-L-kynurenine + H2O = 3-hydroxyanthranilate + L-alanine + H(+). The protein operates within amino-acid degradation; L-kynurenine degradation; L-alanine and anthranilate from L-kynurenine: step 1/1. Its pathway is cofactor biosynthesis; NAD(+) biosynthesis; quinolinate from L-kynurenine: step 2/3. Its function is as follows. Catalyzes the cleavage of L-kynurenine (L-Kyn) and L-3-hydroxykynurenine (L-3OHKyn) into anthranilic acid (AA) and 3-hydroxyanthranilic acid (3-OHAA), respectively. This Sclerotinia sclerotiorum (strain ATCC 18683 / 1980 / Ss-1) (White mold) protein is Kynureninase (bna5).